The primary structure comprises 203 residues: ATP-dependent Clp protease proteolytic subunit (203 aa).

Serine 98 functions as the Nucleophile in the catalytic mechanism. Residue histidine 123 is part of the active site.

This sequence belongs to the peptidase S14 family. In terms of assembly, fourteen ClpP subunits assemble into 2 heptameric rings which stack back to back to give a disk-like structure with a central cavity, resembling the structure of eukaryotic proteasomes.

It localises to the cytoplasm. The catalysed reaction is Hydrolysis of proteins to small peptides in the presence of ATP and magnesium. alpha-casein is the usual test substrate. In the absence of ATP, only oligopeptides shorter than five residues are hydrolyzed (such as succinyl-Leu-Tyr-|-NHMec, and Leu-Tyr-Leu-|-Tyr-Trp, in which cleavage of the -Tyr-|-Leu- and -Tyr-|-Trp bonds also occurs).. Cleaves peptides in various proteins in a process that requires ATP hydrolysis. Has a chymotrypsin-like activity. Plays a major role in the degradation of misfolded proteins. This is ATP-dependent Clp protease proteolytic subunit from Desulfotalea psychrophila (strain LSv54 / DSM 12343).